An 81-amino-acid chain; its full sequence is Small ribosomal subunit protein bS18 (81 aa).

The protein belongs to the bacterial ribosomal protein bS18 family. In terms of assembly, part of the 30S ribosomal subunit. Forms a tight heterodimer with protein bS6.

Functionally, binds as a heterodimer with protein bS6 to the central domain of the 16S rRNA, where it helps stabilize the platform of the 30S subunit. The protein is Small ribosomal subunit protein bS18 of Desulfotalea psychrophila (strain LSv54 / DSM 12343).